We begin with the raw amino-acid sequence, 123 residues long: Large ribosomal subunit protein uL29 (123 aa).

This sequence belongs to the universal ribosomal protein uL29 family. As to quaternary structure, component of the large ribosomal subunit.

It is found in the cytoplasm. Component of the large ribosomal subunit. The ribosome is a large ribonucleoprotein complex responsible for the synthesis of proteins in the cell. The polypeptide is Large ribosomal subunit protein uL29 (rpl35) (Xenopus tropicalis (Western clawed frog)).